The following is a 155-amino-acid chain: Small ribosomal subunit protein uS7 (155 aa).

This sequence belongs to the universal ribosomal protein uS7 family. Part of the 30S ribosomal subunit. Contacts proteins S9 and S11.

Its function is as follows. One of the primary rRNA binding proteins, it binds directly to 16S rRNA where it nucleates assembly of the head domain of the 30S subunit. Is located at the subunit interface close to the decoding center, probably blocks exit of the E-site tRNA. The sequence is that of Small ribosomal subunit protein uS7 from Cytophaga hutchinsonii (strain ATCC 33406 / DSM 1761 / CIP 103989 / NBRC 15051 / NCIMB 9469 / D465).